The sequence spans 498 residues: NADH-quinone oxidoreductase subunit N (498 aa).

14 consecutive transmembrane segments (helical) span residues 10-30 (LMPLAPVMIVALTAVVVMLLI), 44-64 (VVGLNLAALYILLELFGGKFV), 68-88 (VMGMFMVDPFTMFYQFMILVA), 109-129 (ELYLLLLASVAGAMLMVASSH), 130-150 (YASFFISLELMSIPVYGLLAY), 164-184 (YLVLSATASAMLLMGMAYIYA), 207-227 (VLLGLALIIFAVAFKLSLAPF), 239-259 (PAPMATFLATAAKVATIGLFV), 273-293 (LVTVLTIIAVLSILVGNLLAV), 301-321 (ILGYSSIAHFGYLLIALISMT), 328-348 (VTVYVVTYVLTTIGAFGAVAL), 377-397 (ATLTVMMLSLAGIPLTAGFIG), 412-434 (FLAAMIIVGSGIGLYYYLRVMVV), and 458-478 (LMVLAAAALVIILGVYPDPMI).

Belongs to the complex I subunit 2 family. In terms of assembly, NDH-1 is composed of 14 different subunits. Subunits NuoA, H, J, K, L, M, N constitute the membrane sector of the complex.

Its subcellular location is the cell inner membrane. The catalysed reaction is a quinone + NADH + 5 H(+)(in) = a quinol + NAD(+) + 4 H(+)(out). NDH-1 shuttles electrons from NADH, via FMN and iron-sulfur (Fe-S) centers, to quinones in the respiratory chain. The immediate electron acceptor for the enzyme in this species is believed to be ubiquinone. Couples the redox reaction to proton translocation (for every two electrons transferred, four hydrogen ions are translocated across the cytoplasmic membrane), and thus conserves the redox energy in a proton gradient. The chain is NADH-quinone oxidoreductase subunit N from Acinetobacter baumannii (strain AB0057).